A 607-amino-acid chain; its full sequence is Elongation factor 4 (607 aa).

A tr-type G domain is found at 11-193 (ENIRNFSIIA…KIVEVVPAPD (183 aa)). GTP-binding positions include 23–28 (DHGKST) and 140–143 (NKID).

This sequence belongs to the TRAFAC class translation factor GTPase superfamily. Classic translation factor GTPase family. LepA subfamily.

The protein localises to the cell membrane. It catalyses the reaction GTP + H2O = GDP + phosphate + H(+). Functionally, required for accurate and efficient protein synthesis under certain stress conditions. May act as a fidelity factor of the translation reaction, by catalyzing a one-codon backward translocation of tRNAs on improperly translocated ribosomes. Back-translocation proceeds from a post-translocation (POST) complex to a pre-translocation (PRE) complex, thus giving elongation factor G a second chance to translocate the tRNAs correctly. Binds to ribosomes in a GTP-dependent manner. This Staphylococcus aureus (strain MW2) protein is Elongation factor 4.